Here is a 319-residue protein sequence, read N- to C-terminus: Taste receptor type 2 member 39 (319 aa).

Topologically, residues 1 to 16 (MAQPSNYWKQDLLPLS) are extracellular. Residues 17–37 (ILILTLVATECTIGIIASGII) form a helical membrane-spanning segment. Residues 38–56 (TVVNAVSWVQKRAVSITTR) are Cytoplasmic-facing. The helical transmembrane segment at 57 to 77 (ILLLLSVSRIGLQSIILIEMT) threads the bilayer. Topologically, residues 78 to 97 (SSIFNFSSYNSVLYRVSRVS) are extracellular. An N-linked (GlcNAc...) asparagine glycan is attached at asparagine 82. The chain crosses the membrane as a helical span at residues 98–118 (FVFLNYCSLWFAALLSFFHFV). Over 119–137 (KIANFSYPLFFKLKWRISE) the chain is Cytoplasmic. Residues 138–158 (LMPWLLWLSVFISFSSSMFFC) traverse the membrane as a helical segment. Topologically, residues 159–187 (NHKYTVYNNISLSSNICNFTMELYVAEAN) are extracellular. Asparagine 167 and asparagine 176 each carry an N-linked (GlcNAc...) asparagine glycan. A helical membrane pass occupies residues 188–208 (VVNVAFLFSFGILPPLTMFIA). Over 209–247 (TATLLIFSLRRHTLHMRNGDADSRNPRVEAHKQAIKETS) the chain is Cytoplasmic. The helical transmembrane segment at 248–268 (CFLFLYILYAAVLFLSTSNIA) threads the bilayer. Topologically, residues 269 to 273 (DASLF) are extracellular. A helical membrane pass occupies residues 274 to 294 (WSSVLRISLPVYPAGHSVLLI). Residues 295–319 (QSNPGLKRTWKQLLSQIHLHLQSRY) lie on the Cytoplasmic side of the membrane.

The protein belongs to the G-protein coupled receptor T2R family.

The protein localises to the membrane. Putative taste receptor which may play a role in the perception of bitterness. The protein is Taste receptor type 2 member 39 of Rattus norvegicus (Rat).